We begin with the raw amino-acid sequence, 993 residues long: Muscular LMNA-interacting protein (993 aa).

The tract at residues 1–51 (MLSEQGLLSDCGNNYFQMTSCILSGSIQTTPQVSAGGSEAKPLIFTFVPTV) is interaction with LMNA. The segment at 71 to 90 (PEESSDKSPETVNRSKSNDY) is disordered. Residues 80 to 90 (ETVNRSKSNDY) show a composition bias toward polar residues. Position 146 is a phosphoserine (Ser-146). 9 disordered regions span residues 152-171 (AASR…AAVR), 186-225 (VRPK…TSEQ), 231-250 (PAFS…PVNL), 300-322 (PHST…KPGL), 334-358 (SHVL…SLKS), 443-481 (SPAS…QGEL), 500-582 (TPLS…IHTY), 677-711 (SALH…TPSL), and 811-864 (LSMH…SQLT). Residues 161-837 (PPGGIGTAAV…GSDTVKTPTT (677 aa)) are required for interaction with ISL1. Residues 212–225 (KHGQLTSSPTTSEQ) show a composition bias toward polar residues. A compositionally biased stretch (polar residues) spans 300–315 (PHSTQLSGSNLPSSTA). Residues 343 to 358 (PRTSSSPPSSSASLKS) are compositionally biased toward low complexity. The segment covering 500-532 (TPLSQAPSLSPTKQASSSLASMNVERTPSPTLK) has biased composition (polar residues). A compositionally biased stretch (low complexity) spans 533–563 (SNTMLSLLQTSTSSSVGLPPVPPSSSLSSLK). Positions 564-574 (SKQDGDLRGPE) are enriched in basic and acidic residues. A compositionally biased stretch (polar residues) spans 695–711 (SESTTPNHRSPVSTPSL). A compositionally biased stretch (low complexity) spans 811–822 (LSMHSSDSPSRS). Phosphoserine is present on Ser-818. Polar residues predominate over residues 849–864 (ANLSSPSSTVSESQLT).

As to quaternary structure, directly interacts with LMNA. Interacts with ISL1 (via N-terminal domain); the interaction represses ISL1 transactivator activity. Interactions of ISL1 with MLIP1 and GCN5/KAT2A may be mutually exclusive. In terms of tissue distribution, predominantly expressed in the heart and skeletal muscle. Also detected in liver. Expressed in skeletal muscle.

The protein localises to the nucleus. It is found in the nucleus envelope. It localises to the PML body. Its subcellular location is the cytoplasm. The protein resides in the cytosol. The protein localises to the cell membrane. It is found in the sarcolemma. Required for myoblast differentiation into myotubes, possibly acting as a transcriptional regulator of the myogenic program. Required for cardiac adaptation to stress through integrated regulation of the AKT/mTOR pathways and FOXO1. Regulates cardiac homeostasis and plays a role in the protection against cardiac hypertrophy. Binds chromatin. May act as a transcriptional cofactor for ISL1, repressing its transcriptional activity. May also repress MYOCD transcriptional activity. This Homo sapiens (Human) protein is Muscular LMNA-interacting protein.